A 706-amino-acid polypeptide reads, in one-letter code: Elongation factor G (706 aa).

The region spanning 8–297 (SYVRNIGIGA…AVVDYLPSPN (290 aa)) is the tr-type G domain. GTP is bound by residues 17 to 24 (AHIDAGKT), 95 to 99 (DTPGH), and 149 to 152 (NKMD).

This sequence belongs to the TRAFAC class translation factor GTPase superfamily. Classic translation factor GTPase family. EF-G/EF-2 subfamily.

It localises to the cytoplasm. Functionally, catalyzes the GTP-dependent ribosomal translocation step during translation elongation. During this step, the ribosome changes from the pre-translocational (PRE) to the post-translocational (POST) state as the newly formed A-site-bound peptidyl-tRNA and P-site-bound deacylated tRNA move to the P and E sites, respectively. Catalyzes the coordinated movement of the two tRNA molecules, the mRNA and conformational changes in the ribosome. This is Elongation factor G from Orientia tsutsugamushi (strain Boryong) (Rickettsia tsutsugamushi).